A 270-amino-acid chain; its full sequence is ATP phosphoribosyltransferase regulatory subunit (270 aa).

Belongs to the class-II aminoacyl-tRNA synthetase family. HisZ subfamily. As to quaternary structure, heteromultimer composed of HisG and HisZ subunits.

The protein resides in the cytoplasm. Its pathway is amino-acid biosynthesis; L-histidine biosynthesis; L-histidine from 5-phospho-alpha-D-ribose 1-diphosphate: step 1/9. Functionally, required for the first step of histidine biosynthesis. May allow the feedback regulation of ATP phosphoribosyltransferase activity by histidine. The chain is ATP phosphoribosyltransferase regulatory subunit (hisZ) from Staphylococcus epidermidis (strain ATCC 35984 / DSM 28319 / BCRC 17069 / CCUG 31568 / BM 3577 / RP62A).